The primary structure comprises 256 residues: MFKKLINKKNTINNYNEELDSSNIPEHIAIIMDGNGRWAKKRKMPRIKGHYEGMQTIKKITRVASDIGVKYLTLYAFSTENWSRPESEVNYIMNLPVNFLKTFLPELIEKNVKVETIGFTDKLPKSTIEAINNAKEKTANNTGLKLIFAINYGGRAELVHSIKNMFDELHQQGLNSDIIDETYINNHLMTKDYPDPELLIRTSGEQRISNFLIWQVSYSEFIFNQKLWPDFDEDELIKCIKIYQSRQRRFGGLSEE.

The active site involves aspartate 33. Residue aspartate 33 participates in Mg(2+) binding. Substrate is bound by residues 34 to 37, tryptophan 38, arginine 46, histidine 50, and 78 to 80; these read GNGR and STE. Catalysis depends on asparagine 81, which acts as the Proton acceptor. Residues tryptophan 82, arginine 84, arginine 201, and 207–209 each bind substrate; that span reads RIS. Glutamate 220 is a Mg(2+) binding site.

It belongs to the UPP synthase family. As to quaternary structure, homodimer. Mg(2+) is required as a cofactor.

Catalyzes the condensation of isopentenyl diphosphate (IPP) with allylic pyrophosphates generating different type of terpenoids. This Staphylococcus aureus (strain COL) protein is Isoprenyl transferase.